We begin with the raw amino-acid sequence, 279 residues long: NAD kinase (279 aa).

The Proton acceptor role is filled by D63. Residues 63-64 (DG), R68, 133-134 (NE), and D163 each bind NAD(+).

The protein belongs to the NAD kinase family. The cofactor is a divalent metal cation.

The protein localises to the cytoplasm. The catalysed reaction is NAD(+) + ATP = ADP + NADP(+) + H(+). Functionally, involved in the regulation of the intracellular balance of NAD and NADP, and is a key enzyme in the biosynthesis of NADP. Catalyzes specifically the phosphorylation on 2'-hydroxyl of the adenosine moiety of NAD to yield NADP. This is NAD kinase from Protochlamydia amoebophila (strain UWE25).